Reading from the N-terminus, the 997-residue chain is Pro-apoptotic serine protease NMA111 (997 aa).

The segment at 1–43 is disordered; sequence MTISLSNIKKRDHSKISDGTSGESSLVKRKQLESATGDQEEEY. The segment at 83-273 is serine protease; the sequence is VVSIHFSQVA…LPLDRILRAL (191 aa). Catalysis depends on charge relay system residues H121, D152, and S235. PDZ domains are found at residues 300-378 and 779-854; these read RRLG…QRGG and EEWI…VRDG.

It belongs to the peptidase S1C family. In terms of assembly, interacts with BIR1.

Its subcellular location is the nucleus. Functionally, nuclear serine protease which mediates apoptosis through proteolysis of the apoptotic inhibitor BIR1. The polypeptide is Pro-apoptotic serine protease NMA111 (NMA111) (Saccharomyces cerevisiae (strain YJM789) (Baker's yeast)).